The sequence spans 1502 residues: Leucine-rich repeat-containing protein 9 (1502 aa).

29 LRR repeats span residues 53–79, 97–119, 120–141, 142–164, 166–188, 224–247, 296–320, 699–721, 722–744, 746–764, 765–790, 792–814, 822–849, 894–916, 917–938, 939–960, 961–983, 985–1009, 1011–1030, 1031–1053, 1100–1123, 1124–1146, 1147–1170, 1209–1232, 1234–1255, 1256–1278, 1280–1301, 1302–1325, and 1327–1351; these read FPNL…HFLK, CADL…LENL, LKLE…LDMM, QNLK…LDPN, QLER…NLAR, LQRL…TVVK, EHEL…KFHE, YSQI…ISRL, NGLR…SYLT, LEYL…GFKG, LGKL…ILRK, AIQL…VLKD, LTHL…RITQ, YTKI…LEKL, VNLR…LEHC, VNLE…LSKL, TKLR…VIES, SHLH…GYKL, ELYL…SLKG, LNNL…NYRL, FTEL…PADH, FRNV…LIFL, PNIK…KSQS, MQSL…QLGR, RNLK…LENL, QFLR…SFAK, NSLV…LPPL, LKLR…KLEV, and PALV…LLVV. Positions 317–342 are disordered; it reads KFHENNCDTEESNSQQSSERRKNNSD. Positions 1479-1496 are enriched in polar residues; it reads TQQSGQARSQQKHPFNQE. The interval 1479-1502 is disordered; the sequence is TQQSGQARSQQKHPFNQENEGRCV.

The protein is Leucine-rich repeat-containing protein 9 (lrrc9) of Xenopus tropicalis (Western clawed frog).